A 305-amino-acid polypeptide reads, in one-letter code: uncharacterized protein (305 aa).

The interval 267–287 (ADEQEKNWNGGAKKNARAEPA) is disordered.

The protein belongs to the DnaB/DnaD family.

This is an uncharacterized protein from Listeria innocua serovar 6a (strain ATCC BAA-680 / CLIP 11262).